Reading from the N-terminus, the 141-residue chain is Nucleoside diphosphate kinase (141 aa).

K11, F59, R87, T93, R104, and N114 together coordinate ATP. H117 functions as the Pros-phosphohistidine intermediate in the catalytic mechanism.

It belongs to the NDK family. As to quaternary structure, homotetramer. Requires Mg(2+) as cofactor.

Its subcellular location is the cytoplasm. The catalysed reaction is a 2'-deoxyribonucleoside 5'-diphosphate + ATP = a 2'-deoxyribonucleoside 5'-triphosphate + ADP. It carries out the reaction a ribonucleoside 5'-diphosphate + ATP = a ribonucleoside 5'-triphosphate + ADP. Its function is as follows. Major role in the synthesis of nucleoside triphosphates other than ATP. The ATP gamma phosphate is transferred to the NDP beta phosphate via a ping-pong mechanism, using a phosphorylated active-site intermediate. The sequence is that of Nucleoside diphosphate kinase from Xylella fastidiosa (strain M23).